We begin with the raw amino-acid sequence, 789 residues long: DNA topoisomerase 4 subunit A (789 aa).

Residues 34-499 (LPDLRDGLKP…EKQKVQDSDF (466 aa)) enclose the Topo IIA-type catalytic domain. Tyr122 functions as the O-(5'-phospho-DNA)-tyrosine intermediate in the catalytic mechanism.

This sequence belongs to the type II topoisomerase GyrA/ParC subunit family. ParC type 2 subfamily. In terms of assembly, heterotetramer composed of ParC and ParE.

It localises to the cell membrane. The enzyme catalyses ATP-dependent breakage, passage and rejoining of double-stranded DNA.. Functionally, topoisomerase IV is essential for chromosome segregation. It relaxes supercoiled DNA. Performs the decatenation events required during the replication of a circular DNA molecule. The chain is DNA topoisomerase 4 subunit A from Mycoplasma pneumoniae (strain ATCC 29342 / M129 / Subtype 1) (Mycoplasmoides pneumoniae).